We begin with the raw amino-acid sequence, 355 residues long: uncharacterized protein (355 aa).

This is an uncharacterized protein from Aquifex aeolicus (strain VF5).